The following is a 705-amino-acid chain: Polyribonucleotide nucleotidyltransferase (705 aa).

Residues aspartate 486 and aspartate 492 each coordinate Mg(2+). In terms of domain architecture, KH spans 553-612 (PRIYTMKINPEKIKDVIGKGGSVIRALTDETGTTIEIEDDGTIKIAATDGDKAKHAIRRI). One can recognise an S1 motif domain in the interval 622-690 (GRIYAGKVTR…RQGRIRLSIK (69 aa)).

This sequence belongs to the polyribonucleotide nucleotidyltransferase family. In terms of assembly, component of the RNA degradosome, which is a multiprotein complex involved in RNA processing and mRNA degradation. Requires Mg(2+) as cofactor.

The protein localises to the cytoplasm. The catalysed reaction is RNA(n+1) + phosphate = RNA(n) + a ribonucleoside 5'-diphosphate. Involved in mRNA degradation. Catalyzes the phosphorolysis of single-stranded polyribonucleotides processively in the 3'- to 5'-direction. The sequence is that of Polyribonucleotide nucleotidyltransferase from Yersinia pseudotuberculosis serotype O:3 (strain YPIII).